Consider the following 327-residue polypeptide: L-lactate dehydrogenase (327 aa).

NAD(+)-binding positions include Val-18, Asp-39, Lys-44, Tyr-69, and 83–84; that span reads GA. Residues Gln-86, Arg-92, and 124–127 contribute to the substrate site; that span reads NPVD. NAD(+) contacts are provided by residues 122-124 and Ser-147; that span reads AAN. 152 to 155 is a substrate binding site; sequence DSAR. Beta-D-fructose 1,6-bisphosphate contacts are provided by Arg-157 and His-172. His-179 acts as the Proton acceptor in catalysis. At Tyr-224 the chain carries Phosphotyrosine. Substrate is bound at residue Thr-233.

The protein belongs to the LDH/MDH superfamily. LDH family. As to quaternary structure, homotetramer.

It localises to the cytoplasm. The catalysed reaction is (S)-lactate + NAD(+) = pyruvate + NADH + H(+). It participates in fermentation; pyruvate fermentation to lactate; (S)-lactate from pyruvate: step 1/1. Allosterically activated by fructose 1,6-bisphosphate (FBP). Catalyzes the conversion of lactate to pyruvate. The polypeptide is L-lactate dehydrogenase (Streptococcus equi subsp. equi (strain 4047)).